The following is a 1669-amino-acid chain: Dystrophin, isoform B (1669 aa).

The segment covering 1-11 (MTAKPPPPIPP) has biased composition (pro residues). 5 disordered regions span residues 1–28 (MTAK…LAPE), 43–243 (RGQQ…SEDA), 327–356 (RAQA…RSTI), 389–417 (GGGG…MPLS), and 481–508 (SGAL…NSSG). A compositionally biased stretch (polar residues) spans 53–62 (SQEQHATNTL). Pro residues predominate over residues 118–131 (GLPPTMRQPPPLPR). The segment covering 132–147 (KPASTQSSAQNSAQSS) has biased composition (low complexity). Basic and acidic residues predominate over residues 153-166 (KFKDKPPPPPEKHS). 2 stretches are compositionally biased toward low complexity: residues 328-347 (AQAQ…SNSQ) and 396-405 (STGNAVANSG). The span at 485–500 (SREELRMRRRSSHDET) shows a compositional bias: basic and acidic residues. 4 Spectrin repeats span residues 541–643 (QRFE…KQLH), 650–747 (QSFD…NRLE), 754–883 (NALL…HRLD), and 890–990 (RQFQ…KVLC). The interval 827 to 851 (VSDTSDTEANHDSDSRYMSAEEQSR) is disordered. Residues 994 to 1024 (AQQTHENGDDGRTTSNSGTIGPLPNLGQSVK) are disordered. The WW domain maps to 1021–1054 (QSVKPPWERATTAANVPYYIDHERETTHWDHPEM). The ZZ-type zinc finger occupies 1279 to 1335 (KHQAKCNICKEYPIVGFRYRCLKCFNFDMCQKCFFFGRNAKNHKLTHPMHEYCTTTT). 8 residues coordinate Zn(2+): cysteine 1284, cysteine 1287, cysteine 1299, cysteine 1302, cysteine 1308, cysteine 1311, histidine 1321, and histidine 1325. Phosphoserine is present on serine 1379. Disordered stretches follow at residues 1488 to 1516 (EQSG…GEQG) and 1559 to 1669 (DEPN…ELQK). Polar residues-rich tracts occupy residues 1497-1509 (NGMQ…MTGL) and 1580-1611 (ALNS…QQNG). Residues 1630–1641 (QELESINDDLED) show a composition bias toward acidic residues. Low complexity predominate over residues 1642–1660 (SSSSNTTNTTTTTTTTATT).

Component of the dystrophin associated protein complex (DAPC). Interacts with Dg, via the Dg WW domain binding sites. In terms of tissue distribution, expressed in neuronally derived tissues, mainly the CNS and the brain of stage 16 embryos. Lower level expression is seen in the sensory organs. Expression is absent from the musculature. In larvae, expression is predominant throughout the neuropil and brain and in the eye antennal disks.

It is found in the cell membrane. It localises to the sarcolemma. Its subcellular location is the cytoplasm. The protein resides in the cytoskeleton. Functionally, required for the maintenance of appropriate synaptic retrograde communication and the stabilization of muscle cell architecture or physiology. May play a role in anchoring the cytoskeleton to the plasma membrane. The chain is Dystrophin, isoform B (Dys) from Drosophila melanogaster (Fruit fly).